Reading from the N-terminus, the 235-residue chain is Maximins-S type A (235 aa).

The first 18 residues, 1-18, serve as a signal peptide directing secretion; that stretch reads MNFNYFILVLFFITSGHA. 2 propeptides span residues 19–35 and 52–65; these read KSETRDVHQEAENHIKR and SAEEQNLAEDLVKR. At Asn-83 the chain carries Asparagine amide. Residues 87 to 100 constitute a propeptide that is removed on maturation; it reads SAEEQDLAEDLVTR. Asn-118 carries the asparagine amide modification. Residues 122–135 constitute a propeptide that is removed on maturation; the sequence is SAEEQDLAEDLVKR. Position 153 is an asparagine amide (Asn-153). A propeptide spanning residues 157-170 is cleaved from the precursor; the sequence is SAEEQDLAEDLVTR. Lys-188 is subject to Lysine amide. Positions 192–205 are excised as a propeptide; that stretch reads SAEDQDLAEDLVTR. Position 223 is a lysine amide (Lys-223). Residues 227–235 constitute a propeptide that is removed on maturation; sequence SAEQEKDMK.

It belongs to the maximin-S family. Expressed by the skin dorsal glands.

The protein localises to the secreted. In terms of biological role, maximin-S1 has no antimicrobial activity. Has no hemolytic activity. Its function is as follows. Maximin-S2 has an activity against mycoplasma but has no activity against common Gram-positive and Gram-negative bacteria nor fungi. Has no hemolytic activity. Maximin-S3 has an activity against mycoplasma but has no activity against common Gram-positive and Gram-negative bacteria nor fungi. Has no hemolytic activity. Functionally, maximin-S4 has an activity against mycoplasma but has no activity against common Gram-positive and Gram-negative bacteria nor fungi. Has no hemolytic activity. In terms of biological role, maximin-S5 has an activity against mycoplasma but has no activity against common Gram-positive and Gram-negative bacteria nor fungi. Has no hemolytic activity. The sequence is that of Maximins-S type A from Bombina maxima (Giant fire-bellied toad).